A 461-amino-acid polypeptide reads, in one-letter code: Asparagine--tRNA ligase (461 aa).

This sequence belongs to the class-II aminoacyl-tRNA synthetase family. Homodimer.

Its subcellular location is the cytoplasm. It catalyses the reaction tRNA(Asn) + L-asparagine + ATP = L-asparaginyl-tRNA(Asn) + AMP + diphosphate + H(+). This Geotalea uraniireducens (strain Rf4) (Geobacter uraniireducens) protein is Asparagine--tRNA ligase.